The chain runs to 335 residues: Dihydroorotate dehydrogenase (quinone) (335 aa).

Residues alanine 59–lysine 63 and threonine 83 each bind FMN. Lysine 63 contributes to the substrate binding site. Asparagine 108 to phenylalanine 112 serves as a coordination point for substrate. 2 residues coordinate FMN: asparagine 136 and asparagine 169. Asparagine 169 is a binding site for substrate. The active-site Nucleophile is serine 172. Residue asparagine 174 coordinates substrate. Lysine 214 and glycine 242 together coordinate FMN. Residue asparagine 243–threonine 244 participates in substrate binding. Residues glycine 265, glycine 294, and tyrosine 315–serine 316 contribute to the FMN site.

Belongs to the dihydroorotate dehydrogenase family. Type 2 subfamily. As to quaternary structure, monomer. FMN is required as a cofactor.

It is found in the cell membrane. The enzyme catalyses (S)-dihydroorotate + a quinone = orotate + a quinol. Its pathway is pyrimidine metabolism; UMP biosynthesis via de novo pathway; orotate from (S)-dihydroorotate (quinone route): step 1/1. In terms of biological role, catalyzes the conversion of dihydroorotate to orotate with quinone as electron acceptor. This Glaesserella parasuis serovar 5 (strain SH0165) (Haemophilus parasuis) protein is Dihydroorotate dehydrogenase (quinone).